The following is a 376-amino-acid chain: 1-acyl-sn-glycerol-3-phosphate acyltransferase gamma (376 aa).

Over 1-124 (MGLLAYLKTQ…LGSSKVLAKR (124 aa)) the chain is Cytoplasmic. An HXXXXD motif motif is present at residues 96-101 (HNFEID). Residues 125-145 (ELLCVPLIGWTWYFLEIVFCK) form a helical membrane-spanning segment. The Lumenal segment spans residues 146–316 (RKWEEDRDTV…TLLNFLCWAT (171 aa)). The chain crosses the membrane as a helical span at residues 317 to 339 (ILLSPLFSFVLGVFASGSPLLIL). Residues 340 to 376 (TFLGFVGAASFGVRRLIGVTEIEKGSSYGNQELKKKE) lie on the Cytoplasmic side of the membrane.

This sequence belongs to the 1-acyl-sn-glycerol-3-phosphate acyltransferase family. In terms of tissue distribution, widely expressed. Mainly expressed in testis, kidney and liver (at protein level).

The protein resides in the endoplasmic reticulum membrane. It localises to the nucleus envelope. The catalysed reaction is a 1-acyl-sn-glycero-3-phosphate + an acyl-CoA = a 1,2-diacyl-sn-glycero-3-phosphate + CoA. The enzyme catalyses pentadecanoyl-CoA + 1-(9Z-octadecenoyl)-sn-glycero-3-phosphate = 1-(9Z)-octadecenoyl-2-pentadecanoyl-sn-glycero-3-phosphate + CoA. It carries out the reaction heptadecanoyl-CoA + 1-(9Z-octadecenoyl)-sn-glycero-3-phosphate = 1-(9Z)-octadecenoyl-2-heptadecanoyl-sn-glycero-3-phosphate + CoA. It catalyses the reaction 1-(9Z-octadecenoyl)-sn-glycero-3-phosphate + octadecanoyl-CoA = 1-(9Z-octadecenoyl)-2-octadecanoyl-sn-glycero-3-phosphate + CoA. The catalysed reaction is nonadecanoyl-CoA + 1-(9Z-octadecenoyl)-sn-glycero-3-phosphate = 1-(9Z)-octadecenoyl-2-nonadecanoyl-sn-glycero-3-phosphate + CoA. The enzyme catalyses 1-(9Z-octadecenoyl)-sn-glycero-3-phosphate + (5Z,8Z,11Z,14Z)-eicosatetraenoyl-CoA = 1-(9Z)-octadecenoyl-2-(5Z,8Z,11Z,14Z)-eicosatetraenoyl-sn-glycero-3-phosphate + CoA. It carries out the reaction 1-(9Z-octadecenoyl)-sn-glycero-3-phosphate + (9Z)-octadecenoyl-CoA = 1,2-di-(9Z-octadecenoyl)-sn-glycero-3-phosphate + CoA. It catalyses the reaction 1-(9Z-octadecenoyl)-sn-glycero-3-phosphate + (9Z,12Z)-octadecadienoyl-CoA = 1-(9Z)-octadecenoyl-2-(9Z,12Z)-octadecadienoyl-sn-glycero-3-phosphate + CoA. The catalysed reaction is 1-(9Z-octadecenoyl)-sn-glycero-3-phosphocholine + (5Z,8Z,11Z,14Z)-eicosatetraenoyl-CoA = 1-(9Z)-octadecenoyl-2-(5Z,8Z,11Z,14Z)-icosatetraenoyl-sn-glycero-3-phosphocholine + CoA. The enzyme catalyses 1-(9Z-octadecenoyl)-sn-glycero-3-phospho-(1D-myo-inositol) + (5Z,8Z,11Z,14Z)-eicosatetraenoyl-CoA = 1-(9Z-octadecenoyl)-2-(5Z,8Z,11Z,14Z-eicosatetraenoyl)-sn-glycero-3-phospho-1D-myo-inositol + CoA. It carries out the reaction 1-(9Z-octadecenoyl)-sn-glycero-3-phospho-L-serine + (5Z,8Z,11Z,14Z)-eicosatetraenoyl-CoA = 1-(9Z-octadecenoyl)-2-(5Z,8Z,11Z,14Z-eicosatetraenoyl)-sn-glycero-3-phospho-L-serine + CoA. It catalyses the reaction 1-hexadecanoyl-sn-glycero-3-phosphate + (9Z)-octadecenoyl-CoA = 1-hexadecanoyl-2-(9Z-octadecenoyl)-sn-glycero-3-phosphate + CoA. The catalysed reaction is 1-hexadecanoyl-sn-glycero-3-phosphate + (5Z,8Z,11Z,14Z)-eicosatetraenoyl-CoA = 1-hexadecanoyl-2-(5Z,8Z,11Z,14Z-eicosatetraenoyl)-sn-glycero-3-phosphate + CoA. The enzyme catalyses 1-heptadecanoyl-sn-glycero-3-phosphate + (5Z,8Z,11Z,14Z)-eicosatetraenoyl-CoA = 1-heptadecanoyl-2-(5Z,8Z,11Z,14Z)-eicosatetraenoyl-sn-glycero-3-phosphate + CoA. It carries out the reaction 1-octadecanoyl-sn-glycero-3-phosphate + (9Z)-octadecenoyl-CoA = 1-octadecanoyl-2-(9Z-octadecenoyl)-sn-glycero-3-phosphate + CoA. It catalyses the reaction 1-octadecanoyl-sn-glycero-3-phosphate + (5Z,8Z,11Z,14Z)-eicosatetraenoyl-CoA = 1-octadecanoyl-2-(5Z,8Z,11Z,14Z-eicosatetraenoyl)-sn-glycero-3-phosphate + CoA. The catalysed reaction is 1-(9Z-octadecenoyl)-sn-glycero-3-phosphate + hexadecanoyl-CoA = 1-hexadecanoyl-2-(9Z-octadecenoyl)-sn-glycero-3-phosphate + CoA. The enzyme catalyses 1-O-(9Z-octadecenyl)-sn-glycero-3-phosphate + (5Z,8Z,11Z,14Z)-eicosatetraenoyl-CoA = 1-O-(9Z-octadecenyl)-2-(5Z,8Z,11Z,14Z-eicosatetraenoyl)-sn-glycero-3-phosphate + CoA. It carries out the reaction a 1-acyl-sn-glycero-3-phospho-(1D-myo-inositol) + (5Z,8Z,11Z,14Z)-eicosatetraenoyl-CoA = a 1-acyl-2-(5Z,8Z,11Z,14Z-eicosatetraenoyl)-sn-glycero-3-phospho-(1D-myo-inositol) + CoA. It participates in phospholipid metabolism; CDP-diacylglycerol biosynthesis; CDP-diacylglycerol from sn-glycerol 3-phosphate: step 2/3. In males, activity increases in an age-dependent fashion, maybe derived from the induction by sex-hormones. Functionally, converts 1-acyl-sn-glycerol-3-phosphate (lysophosphatidic acid or LPA) into 1,2-diacyl-sn-glycerol-3-phosphate (phosphatidic acid or PA) by incorporating an acyl moiety at the sn-2 position of the glycerol backbone. Acts on LPA containing saturated or unsaturated fatty acids C16:0-C20:4 at the sn-1 position using C18:1, C20:4 or C18:2-CoA as the acyl donor. Also acts on lysophosphatidylcholine, lysophosphatidylinositol and lysophosphatidylserine using C18:1 or C20:4-CoA. Has a preference for arachidonoyl-CoA as a donor. Also has a modest lysophosphatidylinositol acyltransferase (LPIAT) activity, converts lysophosphatidylinositol (LPI) into phosphatidylinositol. In Mus musculus (Mouse), this protein is 1-acyl-sn-glycerol-3-phosphate acyltransferase gamma.